Reading from the N-terminus, the 258-residue chain is MLAKRIIPCLDVKDGQVVKGVQFRNHEIIGDIVPLAQRYAQEGADELVFYDITASSDGRVVDKSWVARVAEVIDIPFCVAGGIKSVEDASQILTFGADKISINSPALADPTLITRLADRYGVQCIVVGIDTWYDTESDSYQVYQFTGDEKRTKATTWQTEDWVKEVQLRGAGEIVLNMMNQDGVRNGYDLRQLQQMRAICHVPLIASGGAGTPEHFLEAFRDADVDGALAASVFHKQIINIGELKKYLSEQGVEIRVC.

Active-site residues include Asp11 and Asp130.

It belongs to the HisA/HisF family. Heterodimer of HisH and HisF.

It localises to the cytoplasm. It catalyses the reaction 5-[(5-phospho-1-deoxy-D-ribulos-1-ylimino)methylamino]-1-(5-phospho-beta-D-ribosyl)imidazole-4-carboxamide + L-glutamine = D-erythro-1-(imidazol-4-yl)glycerol 3-phosphate + 5-amino-1-(5-phospho-beta-D-ribosyl)imidazole-4-carboxamide + L-glutamate + H(+). Its pathway is amino-acid biosynthesis; L-histidine biosynthesis; L-histidine from 5-phospho-alpha-D-ribose 1-diphosphate: step 5/9. In terms of biological role, IGPS catalyzes the conversion of PRFAR and glutamine to IGP, AICAR and glutamate. The HisF subunit catalyzes the cyclization activity that produces IGP and AICAR from PRFAR using the ammonia provided by the HisH subunit. In Yersinia pseudotuberculosis serotype IB (strain PB1/+), this protein is Imidazole glycerol phosphate synthase subunit HisF.